A 328-amino-acid chain; its full sequence is Malate dehydrogenase 1 (328 aa).

12-18 serves as a coordination point for NAD(+); it reads GAAGQIG. 2 residues coordinate substrate: R95 and R101. NAD(+)-binding positions include N108, Q115, and 132 to 134; that span reads VGN. Substrate-binding residues include N134 and R165. H190 serves as the catalytic Proton acceptor.

This sequence belongs to the LDH/MDH superfamily. MDH type 2 family.

It catalyses the reaction (S)-malate + NAD(+) = oxaloacetate + NADH + H(+). In terms of biological role, catalyzes the reversible oxidation of malate to oxaloacetate. The chain is Malate dehydrogenase 1 from Albidiferax ferrireducens (strain ATCC BAA-621 / DSM 15236 / T118) (Rhodoferax ferrireducens).